The chain runs to 985 residues: Bifunctional glutamine synthetase adenylyltransferase/adenylyl-removing enzyme (985 aa).

The adenylyl removase stretch occupies residues 1–460 (MSLPSLADFP…HFRQVIADPD (460 aa)). The adenylyl transferase stretch occupies residues 476-985 (GGEWLPLWEE…MRIWAQMGLS (510 aa)).

Belongs to the GlnE family. The cofactor is Mg(2+).

The enzyme catalyses [glutamine synthetase]-O(4)-(5'-adenylyl)-L-tyrosine + phosphate = [glutamine synthetase]-L-tyrosine + ADP. The catalysed reaction is [glutamine synthetase]-L-tyrosine + ATP = [glutamine synthetase]-O(4)-(5'-adenylyl)-L-tyrosine + diphosphate. Functionally, involved in the regulation of glutamine synthetase GlnA, a key enzyme in the process to assimilate ammonia. When cellular nitrogen levels are high, the C-terminal adenylyl transferase (AT) inactivates GlnA by covalent transfer of an adenylyl group from ATP to specific tyrosine residue of GlnA, thus reducing its activity. Conversely, when nitrogen levels are low, the N-terminal adenylyl removase (AR) activates GlnA by removing the adenylyl group by phosphorolysis, increasing its activity. The regulatory region of GlnE binds the signal transduction protein PII (GlnB) which indicates the nitrogen status of the cell. The polypeptide is Bifunctional glutamine synthetase adenylyltransferase/adenylyl-removing enzyme (Pseudomonas syringae pv. tomato (strain ATCC BAA-871 / DC3000)).